The primary structure comprises 392 residues: Na(+)/H(+) antiporter NhaA 2 (392 aa).

The next 11 helical transmembrane spans lie at 20-40 (FFAAEAAGGLILMAAALAALI), 63-83 (VEHWINDGLMAIFFMLVGLEI), 99-119 (ALPGFAALGGMVVPALIYVAF), 127-147 (IGGWAIPAATDIAFALGVLSL), 158-178 (IFLSALAILDDLGAVLIIALF), 181-201 (SDLSIPMLLAALGSIAVLVAL), 209-229 (LLPYLIVGALLWFFMLQSGIH), 265-285 (VAFAVVPVFGFANAGVSLSGI), 298-318 (VALGLLIGKQVGIFALAALAI), 336-356 (GVAALCGIGFTMSLFIGALAF), and 365-385 (EVKVGVLIGSVLSALLGVVVL).

It belongs to the NhaA Na(+)/H(+) (TC 2.A.33) antiporter family.

The protein resides in the cell inner membrane. The enzyme catalyses Na(+)(in) + 2 H(+)(out) = Na(+)(out) + 2 H(+)(in). Functionally, na(+)/H(+) antiporter that extrudes sodium in exchange for external protons. The sequence is that of Na(+)/H(+) antiporter NhaA 2 from Pseudomonas savastanoi pv. phaseolicola (strain 1448A / Race 6) (Pseudomonas syringae pv. phaseolicola (strain 1448A / Race 6)).